The primary structure comprises 302 residues: 33 kDa chaperonin (302 aa).

Intrachain disulfides connect Cys234-Cys236 and Cys267-Cys270.

The protein belongs to the HSP33 family. Post-translationally, under oxidizing conditions two disulfide bonds are formed involving the reactive cysteines. Under reducing conditions zinc is bound to the reactive cysteines and the protein is inactive.

The protein localises to the cytoplasm. Redox regulated molecular chaperone. Protects both thermally unfolding and oxidatively damaged proteins from irreversible aggregation. Plays an important role in the bacterial defense system toward oxidative stress. In Neisseria gonorrhoeae (strain NCCP11945), this protein is 33 kDa chaperonin.